The chain runs to 143 residues: Transcriptional regulator MraZ (143 aa).

SpoVT-AbrB domains follow at residues 5 to 47 (TYAP…SQRE) and 76 to 119 (ASAE…DAEA).

It belongs to the MraZ family. As to quaternary structure, forms oligomers.

It localises to the cytoplasm. Its subcellular location is the nucleoid. This Leifsonia xyli subsp. xyli (strain CTCB07) protein is Transcriptional regulator MraZ.